Here is a 366-residue protein sequence, read N- to C-terminus: N-methyltransferase fsqC (366 aa).

Residues 1–18 (MSSNVQDIRGWPPPFANA) form the signal peptide. N-linked (GlcNAc...) asparagine glycosylation occurs at Asn270.

Belongs to the methyltransferase superfamily.

Its pathway is secondary metabolite biosynthesis. N-methyltransferase; part of the gene cluster that mediates the biosynthesis of the isoquinoline alkaloids fumisoquin A, fumisoquin B and fumisoquin C; as well as small amounts of fumipyrrole as a shunt metabolite. The products of the cluster lead to a brown coloration and are important for growth and conidiation. The nonribosomal peptide synthetase-like protein fsqF, which lacks a canonical condensation domain, is required for addition of a serine-derived dehydroalanine moiety to activated tyrosine but is not essential for the subsequent steps leading to isoquinoline formation. A different enzyme, most likely the ATP-grasp enzyme fsqD, is responsible for activation of tyrosine. Three additional enzymes encoded by the fsq cluster, the N-methyltransferase fsqC, the phenol 2-monooxygenase fsqG and the FAD-dependent oxidase fsqB, catalyze the formation of the isoquinoline ring system in the fumisoquins. FsqB converts the fspF thiolation domain-bound (2S,4S,5S)-2-amino-6-(3,4-dihydroxyphenyl)-4-hydroxy-5-(methylamino)hexanoyl into isoquinoline. The cyclization most likely proceeds via a two-step mechanism, beginning with FAD-dependent oxidation of the methyl group to an iminium species followed by electrophilic attack on the deprotonated phenol. The polypeptide is N-methyltransferase fsqC (Aspergillus fumigatus (strain ATCC MYA-4609 / CBS 101355 / FGSC A1100 / Af293) (Neosartorya fumigata)).